A 59-amino-acid polypeptide reads, in one-letter code: Large ribosomal subunit protein uL30 (59 aa).

The protein belongs to the universal ribosomal protein uL30 family. Part of the 50S ribosomal subunit.

This is Large ribosomal subunit protein uL30 from Clostridium beijerinckii (strain ATCC 51743 / NCIMB 8052) (Clostridium acetobutylicum).